Reading from the N-terminus, the 140-residue chain is Pro-vaccinia growth factor (140 aa).

The N-terminal stretch at 1–18 (MLINYLMLLFAAMIIRSF) is a signal peptide. Topologically, residues 19–100 (ADSGNAIETT…SEKPNTTTSY (82 aa)) are extracellular. A glycan (N-linked (GlcNAc...) asparagine; by host) is linked at Asn34. Positions 41-81 (AIRLCGPEGDGYCLHGDCIHARDIDGMYCRCSHGYTGIRCQ) constitute an EGF-like domain. 3 cysteine pairs are disulfide-bonded: Cys45–Cys58, Cys53–Cys69, and Cys71–Cys80. N-linked (GlcNAc...) asparagine; by host glycosylation occurs at Asn95. The helical transmembrane segment at 101–121 (IPSPGIMLVLVGIIIITCCLL) threads the bilayer. Residues 122–140 (SVYRFTRRTKLPIQDMVVP) are Cytoplasmic-facing.

It belongs to the orthopoxvirus OPG019 family. In terms of assembly, interacts with host EGFR.

The protein localises to the host membrane. It is found in the secreted. In terms of biological role, stimulates cellular proliferation (hyperplasia)and mobility around infected cells to promote rapid and efficient spread of infection. This effect is beneficial for virus replication in vivo, because poxviruses replicate possibly better in proliferating cells than in quiescent cells. Acts by binding host EGFR, inducing its dimerization, autophosphorylation and leading to activation of several cellular pathways regulating cell proliferation or cell survival. The activation by host EGFR of mitogen activated protein kinases (MAPK) and extracellular-signal regulated kinases (ERK) are essential for the positive effect of vaccinia growth factor on poxvirus virulence in vivo. This is Pro-vaccinia growth factor (OPG019) from Homo sapiens (Human).